A 329-amino-acid chain; its full sequence is uncharacterized protein (329 aa).

Transmembrane regions (helical) follow at residues 29–49 (IVLWALFVFCAIATAFLAISH), 78–98 (VLVAQILTPIFTVLLILCWMG), 120–140 (KKWLLWAIFIPQLTLTNSLLV), 164–184 (WMIGFFVVWFIQLFLGFLIYL), 217–237 (YFFLGLIFAFMDLTIIVLLVI), 260–280 (FFWTALAIDVIGLIMTISFIV), and 299–319 (GSSLMALITIATLVTTILLFI).

To M.pneumoniae MPN_129.

Its subcellular location is the cell membrane. This is an uncharacterized protein from Mycoplasma pneumoniae (strain ATCC 29342 / M129 / Subtype 1) (Mycoplasmoides pneumoniae).